The chain runs to 446 residues: Tubulin beta chain (446 aa).

Glutamine 11, glutamate 69, serine 138, glycine 142, threonine 143, glycine 144, asparagine 204, and asparagine 226 together coordinate GTP. Position 69 (glutamate 69) interacts with Mg(2+). The disordered stretch occupies residues 422 to 446 (YQQYQDAGIDEEEEEYEEELPEGEE). Positions 429 to 446 (GIDEEEEEYEEELPEGEE) are enriched in acidic residues.

Belongs to the tubulin family. Dimer of alpha and beta chains. A typical microtubule is a hollow water-filled tube with an outer diameter of 25 nm and an inner diameter of 15 nM. Alpha-beta heterodimers associate head-to-tail to form protofilaments running lengthwise along the microtubule wall with the beta-tubulin subunit facing the microtubule plus end conferring a structural polarity. Microtubules usually have 13 protofilaments but different protofilament numbers can be found in some organisms and specialized cells. Mg(2+) serves as cofactor.

Its subcellular location is the cytoplasm. The protein localises to the cytoskeleton. In terms of biological role, tubulin is the major constituent of microtubules, a cylinder consisting of laterally associated linear protofilaments composed of alpha- and beta-tubulin heterodimers. Microtubules grow by the addition of GTP-tubulin dimers to the microtubule end, where a stabilizing cap forms. Below the cap, tubulin dimers are in GDP-bound state, owing to GTPase activity of alpha-tubulin. This is Tubulin beta chain (TUB2) from Gibberella zeae (strain ATCC MYA-4620 / CBS 123657 / FGSC 9075 / NRRL 31084 / PH-1) (Wheat head blight fungus).